We begin with the raw amino-acid sequence, 487 residues long: UDP-N-acetylmuramate--L-alanine ligase (487 aa).

Position 126-132 (Gly-126–Thr-132) interacts with ATP.

This sequence belongs to the MurCDEF family.

It is found in the cytoplasm. The catalysed reaction is UDP-N-acetyl-alpha-D-muramate + L-alanine + ATP = UDP-N-acetyl-alpha-D-muramoyl-L-alanine + ADP + phosphate + H(+). Its pathway is cell wall biogenesis; peptidoglycan biosynthesis. In terms of biological role, cell wall formation. The chain is UDP-N-acetylmuramate--L-alanine ligase from Psychromonas ingrahamii (strain DSM 17664 / CCUG 51855 / 37).